Here is a 498-residue protein sequence, read N- to C-terminus: Tyrosine 3-monooxygenase (498 aa).

Polar residues predominate over residues 1–10; the sequence is MPTPSASSPQ. The tract at residues 1–33 is disordered; it reads MPTPSASSPQPKGFRRAVSEQDTKQAEAVTSPR. Ser19 and Ser31 each carry phosphoserine. A Phosphoserine; by CaMK2 and PKA modification is found at Ser40. 3 residues coordinate Fe cation: His331, His336, and Glu376. A Phosphoserine modification is found at Ser472.

It belongs to the biopterin-dependent aromatic amino acid hydroxylase family. Homotetramer. Interacts (when phosphorylated at Ser-19) with YWHAG; one YWHAG dimer bounds to one TH tetramer and this interaction may influence the phosphorylation and dephosphorylation of other sites. Interacts with NT5DC2; the interaction results in reduced phosphorylation and decreased catalytic activity of TH. Fe(2+) serves as cofactor. In terms of processing, phosphorylated on Ser-19, Ser-31 and Ser-40 by several protein kinases with different site specificities. Phosphorylation at Ser-31 and Ser-40 leads to an increase of TH activity. Phosphorylation at Ser-40 activates the enzyme and also counteracts the feedback inhibition of TH by catecholamines. Phosphorylation of Ser-19 and Ser-31 triggers the proteasomal degradation of TH through the ubiquitin-proteasome pathway. Phosphorylation at Ser-31 facilitates transport of TH from the soma to the nerve terminals via the microtubule network. Phosphorylation at Ser-19 induces the high-affinity binding to the 14-3-3 protein YWHAG; this interaction may influence the phosphorylation and dephosphorylation of other sites. Ser-19 increases the phosphorylation at Ser-40 in a hierarchical manner, leading to increased activity. In terms of tissue distribution, expressed in the adrenal gland. Expressed in the retina. Expressed in the in the striatum (at protein level).

The protein resides in the cytoplasm. It is found in the perinuclear region. It localises to the nucleus. Its subcellular location is the cell projection. The protein localises to the axon. The protein resides in the cytoplasmic vesicle. It is found in the secretory vesicle. It localises to the synaptic vesicle. The catalysed reaction is (6R)-L-erythro-5,6,7,8-tetrahydrobiopterin + L-tyrosine + O2 = (4aS,6R)-4a-hydroxy-L-erythro-5,6,7,8-tetrahydrobiopterin + L-dopa. It functions in the pathway catecholamine biosynthesis; dopamine biosynthesis; dopamine from L-tyrosine: step 1/2. Inhibited in feedback fashion by the catecholamine neurotransmitters, especially by dopamine in competition with tetrahydrobiopterin. Phosphorylation of several Ser/Thr residues in the N-terminus regulates the catalytic activity. Ser-31 and Ser-40 are readily phosphorylated to activate the catalytic activity. A Cysteine modification induced by N-ethylmaleimide (NEM), inhibits tyrosine 3-monooxygenase activity through the modification of the Cys-177. Catalyzes the conversion of L-tyrosine to L-dihydroxyphenylalanine (L-Dopa), the rate-limiting step in the biosynthesis of catecholamines, dopamine, noradrenaline, and adrenaline. Uses tetrahydrobiopterin and molecular oxygen to convert tyrosine to L-Dopa. In addition to tyrosine, is able to catalyze the hydroxylation of phenylalanine and tryptophan with lower specificity. Positively regulates the regression of retinal hyaloid vessels during postnatal development. The protein is Tyrosine 3-monooxygenase (Th) of Mus musculus (Mouse).